A 146-amino-acid polypeptide reads, in one-letter code: Horcolin (146 aa).

The segment at 1–21 is disordered; that stretch reads MSKPVKIGPWGGNGGSERDVQ. In terms of domain architecture, Jacalin-type lectin spans 4-146; that stretch reads PVKIGPWGGN…LDAIGFYITP (143 aa).

It belongs to the jacalin lectin family.

It is found in the secreted. It localises to the extracellular space. The protein localises to the apoplast. Functionally, mannose-specific lectin. Has a weak agglutinating activity against rabbit erythrocytes. The chain is Horcolin from Hordeum vulgare (Barley).